The sequence spans 824 residues: Leucine--tRNA ligase (824 aa).

A 'HIGH' region motif is present at residues 42 to 52 (PYPSGRIHMGH). Positions 581 to 585 (KMSKS) match the 'KMSKS' region motif. Lys584 serves as a coordination point for ATP.

This sequence belongs to the class-I aminoacyl-tRNA synthetase family.

It localises to the cytoplasm. It catalyses the reaction tRNA(Leu) + L-leucine + ATP = L-leucyl-tRNA(Leu) + AMP + diphosphate. In Geobacter sulfurreducens (strain ATCC 51573 / DSM 12127 / PCA), this protein is Leucine--tRNA ligase.